The chain runs to 184 residues: Der GTPase-activating protein YihI (184 aa).

2 disordered regions span residues 1 to 106 (MNRP…PTMS) and 159 to 184 (LGDDDEEEQQEDMLQLLKRNNPKDAL). The segment covering 8 to 32 (VADKAEKSKVKRKTREELEREARER) has biased composition (basic and acidic residues). The segment covering 159–169 (LGDDDEEEQQE) has biased composition (acidic residues).

This sequence belongs to the YihI family. Interacts with Der.

Functionally, a GTPase-activating protein (GAP) that modifies Der/EngA GTPase function. May play a role in ribosome biogenesis. The protein is Der GTPase-activating protein YihI of Pectobacterium atrosepticum (strain SCRI 1043 / ATCC BAA-672) (Erwinia carotovora subsp. atroseptica).